The primary structure comprises 910 residues: DNA mismatch repair protein MutS (910 aa).

607 to 614 (GPNMAGKS) is a binding site for ATP.

This sequence belongs to the DNA mismatch repair MutS family.

Its function is as follows. This protein is involved in the repair of mismatches in DNA. It is possible that it carries out the mismatch recognition step. This protein has a weak ATPase activity. The chain is DNA mismatch repair protein MutS from Geobacillus thermodenitrificans (strain NG80-2).